The chain runs to 261 residues: Small ribosomal subunit protein eS1B (261 aa).

Residues 1 to 18 (MTLGKNKRISKGGKRGKK) are compositionally biased toward basic residues. The tract at residues 1–23 (MTLGKNKRISKGGKRGKKKAQET) is disordered.

It belongs to the eukaryotic ribosomal protein eS1 family. In terms of assembly, component of the small ribosomal subunit. Mature ribosomes consist of a small (40S) and a large (60S) subunit. The 40S subunit contains about 33 different proteins and 1 molecule of RNA (18S). The 60S subunit contains about 49 different proteins and 3 molecules of RNA (25S, 5.8S and 5S).

It localises to the cytoplasm. In Trypanosoma cruzi (strain CL Brener), this protein is Small ribosomal subunit protein eS1B.